The sequence spans 652 residues: Probable endo-1,3(4)-beta-glucanase AFUB_029980 (652 aa).

The N-terminal stretch at 1–21 is a signal peptide; it reads MAPSSLLLSVGSLITSSLVSA. One can recognise a GH16 domain in the interval 36–289; the sequence is ESWQGESFIN…WAGNVFAEST (254 aa). The N-linked (GlcNAc...) asparagine glycan is linked to Asn-64. Glu-145 serves as the catalytic Nucleophile. Glu-150 acts as the Proton donor in catalysis. 2 N-linked (GlcNAc...) asparagine glycosylation sites follow: Asn-200 and Asn-208. The disordered stretch occupies residues 379 to 423; it reads NTVATSAADHATPSSAETTTVPAATGAPSVSATEGGDSELESTST. The span at 390-410 shows a compositional bias: polar residues; the sequence is TPSSAETTTVPAATGAPSVSA. Residue Asn-453 is glycosylated (N-linked (GlcNAc...) asparagine). The interval 509-551 is disordered; that stretch reads SEIPTAPPEPVSQAVSTGSFDDSDTAQGDSEEQGSIASASVAP. Residues 529–540 are compositionally biased toward acidic residues; sequence DDSDTAQGDSEE. The GPI-anchor amidated asparagine moiety is linked to residue Asn-630. The propeptide at 631-652 is removed in mature form; it reads GANRMSVGLSGLIGVMFIAALA.

Belongs to the glycosyl hydrolase 16 family.

The protein localises to the cell membrane. It carries out the reaction Endohydrolysis of (1-&gt;3)- or (1-&gt;4)-linkages in beta-D-glucans when the glucose residue whose reducing group is involved in the linkage to be hydrolyzed is itself substituted at C-3.. Mixed-linked glucanase involved in the degradation of complex natural cellulosic substrates. This chain is Probable endo-1,3(4)-beta-glucanase AFUB_029980, found in Aspergillus fumigatus (strain CBS 144.89 / FGSC A1163 / CEA10) (Neosartorya fumigata).